Here is a 677-residue protein sequence, read N- to C-terminus: Nucleolar protein 9 (677 aa).

The span at 1-12 (MAKPRGRKLLKK) shows a compositional bias: basic residues. A disordered region spans residues 1–50 (MAKPRGRKLLKKQQKDQFEPSNDVEKFEDDRDHQENVYQGDAADSEKSSD). Basic and acidic residues predominate over residues 13–35 (QQKDQFEPSNDVEKFEDDRDHQE). 8 Pumilio repeats span residues 94 to 129 (EAKG…SVFK), 130 to 165 (AFNG…ELLT), 193 to 228 (ELKP…SSTK), 287 to 331 (DISP…LVFN), 339 to 374 (KEEA…RLYH), 375 to 412 (LYMK…QILD), 516 to 553 (NLPE…RLLL), and 554 to 592 (NVLS…RIAQ). The segment at 639-677 (PNAVKPQPKNQQFKNNGNDNKRSSDSNYSSSSNFKKQRR) is disordered. The segment covering 646-655 (PKNQQFKNNG) has biased composition (polar residues).

Belongs to the NOP9 family.

It localises to the nucleus. It is found in the nucleolus. Functionally, RNA-binding nucleolar protein required for pre-rRNA processing. Involved in production of 18S rRNA and assembly of small ribosomal subunit. The sequence is that of Nucleolar protein 9 (NOP9) from Vanderwaltozyma polyspora (strain ATCC 22028 / DSM 70294 / BCRC 21397 / CBS 2163 / NBRC 10782 / NRRL Y-8283 / UCD 57-17) (Kluyveromyces polysporus).